A 448-amino-acid polypeptide reads, in one-letter code: DNA repair protein RadA (448 aa).

A C4-type zinc finger spans residues C10–C27. Position 91-98 (G91–S98) interacts with ATP. Positions K250 to G254 match the RadA KNRFG motif motif. The tract at residues E349–S448 is lon-protease-like.

Belongs to the RecA family. RadA subfamily.

Its function is as follows. DNA-dependent ATPase involved in processing of recombination intermediates, plays a role in repairing DNA breaks. Stimulates the branch migration of RecA-mediated strand transfer reactions, allowing the 3' invading strand to extend heteroduplex DNA faster. Binds ssDNA in the presence of ADP but not other nucleotides, has ATPase activity that is stimulated by ssDNA and various branched DNA structures, but inhibited by SSB. Does not have RecA's homology-searching function. The sequence is that of DNA repair protein RadA from Rickettsia bellii (strain RML369-C).